The chain runs to 241 residues: Biosynthetic peptidoglycan transglycosylase (241 aa).

The helical transmembrane segment at 18–38 threads the bilayer; that stretch reads GVIGIIALWMAGILIFAFLPV.

This sequence belongs to the glycosyltransferase 51 family.

The protein resides in the cell inner membrane. It catalyses the reaction [GlcNAc-(1-&gt;4)-Mur2Ac(oyl-L-Ala-gamma-D-Glu-L-Lys-D-Ala-D-Ala)](n)-di-trans,octa-cis-undecaprenyl diphosphate + beta-D-GlcNAc-(1-&gt;4)-Mur2Ac(oyl-L-Ala-gamma-D-Glu-L-Lys-D-Ala-D-Ala)-di-trans,octa-cis-undecaprenyl diphosphate = [GlcNAc-(1-&gt;4)-Mur2Ac(oyl-L-Ala-gamma-D-Glu-L-Lys-D-Ala-D-Ala)](n+1)-di-trans,octa-cis-undecaprenyl diphosphate + di-trans,octa-cis-undecaprenyl diphosphate + H(+). It participates in cell wall biogenesis; peptidoglycan biosynthesis. Functionally, peptidoglycan polymerase that catalyzes glycan chain elongation from lipid-linked precursors. This is Biosynthetic peptidoglycan transglycosylase from Yersinia pseudotuberculosis serotype O:1b (strain IP 31758).